Reading from the N-terminus, the 234-residue chain is Chalcone--flavanone isomerase 2 (234 aa).

Positions 50, 115, and 192 each coordinate substrate.

It belongs to the chalcone isomerase family.

The catalysed reaction is a chalcone = a flavanone.. The protein operates within secondary metabolite biosynthesis; flavonoid biosynthesis. Catalyzes the intramolecular cyclization of bicyclic chalcones into tricyclic (S)-flavanones. Responsible for the isomerization of 4,2',4',6'-tetrahydroxychalcone (also termed chalcone) into naringenin. The chain is Chalcone--flavanone isomerase 2 (CHI2) from Vitis vinifera (Grape).